Reading from the N-terminus, the 150-residue chain is UPF0178 protein HCH_06960 (150 aa).

It belongs to the UPF0178 family.

The sequence is that of UPF0178 protein HCH_06960 from Hahella chejuensis (strain KCTC 2396).